Consider the following 61-residue polypeptide: Large ribosomal subunit protein bL32c (61 aa).

A disordered region spans residues 37-61 (SRSFSSGNEHPKPKGFSGQQQQTNK).

The protein belongs to the bacterial ribosomal protein bL32 family.

The protein localises to the plastid. Its subcellular location is the chloroplast. This is Large ribosomal subunit protein bL32c from Agrostis stolonifera (Creeping bentgrass).